Consider the following 64-residue polypeptide: uncharacterized protein (64 aa).

Residues 1–64 (MNNPNIVPPH…QNQPPQRPQY (64 aa)) form a disordered region. Residues 8–32 (PPHFNQHQQQNHNQNQPPHHMNNPN) show a composition bias toward low complexity.

This is an uncharacterized protein from Dictyostelium discoideum (Social amoeba).